Here is a 46-residue protein sequence, read N- to C-terminus: Protein YmiA (46 aa).

The chain crosses the membrane as a helical span at residues 22–42 (AWLAVFLGSALFWVVVALLIW).

The protein resides in the cell inner membrane. This is Protein YmiA (ymiA) from Escherichia coli (strain K12).